The sequence spans 2083 residues: Centriole proteome protein 16 (2083 aa).

A disordered region spans residues 205 to 333; it reads DAPTMDFMPP…PAVPPPLSPS (129 aa). Residues 227-245 are compositionally biased toward low complexity; sequence TAETADTAGAAGRKSLSGA. The segment covering 246–258 has biased composition (gly residues); sequence SAGGAGPAKGGAK. 2 stretches are compositionally biased toward low complexity: residues 259–274 and 283–292; these read AGAA…SAGA and GSTAGAATPG. The span at 302–315 shows a compositional bias: acidic residues; the sequence is GEEDFEDDLSEDLD. Residues 319–331 are compositionally biased toward pro residues; the sequence is PLPPSPAVPPPLS. 10 WD repeats span residues 482–523, 526–569, 579–620, 689–726, 728–767, 770–809, 812–853, 856–895, 990–1029, and 1041–1079; these read GHTA…CLAI, AHAS…AAGG, ATEY…GTSV, LHAA…YLLE, EHEG…YTTL, SHCG…QLYE, APGE…LLQE, QHRA…APAQ, VSPL…ALRG, and GHPS…MQQE. Disordered regions lie at residues 1113–1141 and 1225–1276; these read HTQA…VASA and ALVV…PPPP. The span at 1263–1276 shows a compositional bias: pro residues; that stretch reads VPLPPSPQPLPPPP. WD repeat units follow at residues 1326–1365, 1403–1444, 1448–1486, 1497–1539, 1651–1691, 1736–1781, and 1785–1824; these read GHNR…RAAQ, YHPL…LVAA, EQSP…LEQR, RDPR…QPPQ, GQAA…AEPA, DPLD…QLSW, and RHPA…LVSY. The interval 1713 to 1743 is disordered; the sequence is APAHTLRHPPSAAPSSAASSSPLDPLDPLPA. Low complexity predominate over residues 1720 to 1743; the sequence is HPPSAAPSSAASSSPLDPLDPLPA. Positions 1832–1870 are disordered; sequence GPTPHSPGGTGRRSPRGAASPPPAPPRPGTGPLQAMAVS. Residues 1851 to 1860 show a composition bias toward pro residues; the sequence is SPPPAPPRPG. A WD 18 repeat occupies 2035–2073; that stretch reads GHAGAVAAASYTGDGGHAVTASGSVLMVWDAAQLLKGVT.

It belongs to the WD repeat WDR90/POC16 family.

Its subcellular location is the cytoplasm. It localises to the cytoskeleton. The protein resides in the microtubule organizing center. The protein localises to the centrosome. It is found in the centriole. Its function is as follows. Required for flagellum assembly and/or maintenance. The protein is Centriole proteome protein 16 of Chlamydomonas reinhardtii (Chlamydomonas smithii).